Consider the following 441-residue polypeptide: Ribulose bisphosphate carboxylase (441 aa).

The Proton acceptor role is filled by Lys-160. Lys-162 lines the substrate pocket. The Mg(2+) site is built by Lys-186, Asp-188, and Glu-189. At Lys-186 the chain carries N6-carboxylysine. His-278 acts as the Proton acceptor in catalysis. Residues Arg-279, His-311, 364–366, and 386–389 each bind substrate; these read SGG and QVGG.

This sequence belongs to the RuBisCO large chain family. Type III subfamily. In terms of assembly, homodimer. In contrast to form I RuBisCO, the form III RuBisCO is composed solely of large subunits. Mg(2+) is required as a cofactor.

It carries out the reaction 2 (2R)-3-phosphoglycerate + 2 H(+) = D-ribulose 1,5-bisphosphate + CO2 + H2O. The enzyme catalyses D-ribulose 1,5-bisphosphate + O2 = 2-phosphoglycolate + (2R)-3-phosphoglycerate + 2 H(+). With respect to regulation, reversibly inhibited by O(2). Its function is as follows. Catalyzes the addition of molecular CO(2) and H(2)O to ribulose 1,5-bisphosphate (RuBP), generating two molecules of 3-phosphoglycerate (3-PGA). Functions in an archaeal AMP degradation pathway, together with AMP phosphorylase and R15P isomerase. The polypeptide is Ribulose bisphosphate carboxylase (Archaeoglobus fulgidus (strain ATCC 49558 / DSM 4304 / JCM 9628 / NBRC 100126 / VC-16)).